A 487-amino-acid chain; its full sequence is Glutamyl-tRNA(Gln) amidotransferase subunit A (487 aa).

Catalysis depends on charge relay system residues Lys-77 and Ser-152. The active-site Acyl-ester intermediate is Ser-176.

It belongs to the amidase family. GatA subfamily. In terms of assembly, heterotrimer of A, B and C subunits.

The enzyme catalyses L-glutamyl-tRNA(Gln) + L-glutamine + ATP + H2O = L-glutaminyl-tRNA(Gln) + L-glutamate + ADP + phosphate + H(+). In terms of biological role, allows the formation of correctly charged Gln-tRNA(Gln) through the transamidation of misacylated Glu-tRNA(Gln) in organisms which lack glutaminyl-tRNA synthetase. The reaction takes place in the presence of glutamine and ATP through an activated gamma-phospho-Glu-tRNA(Gln). This Limosilactobacillus fermentum (strain NBRC 3956 / LMG 18251) (Lactobacillus fermentum) protein is Glutamyl-tRNA(Gln) amidotransferase subunit A.